We begin with the raw amino-acid sequence, 805 residues long: Leucine--tRNA ligase (805 aa).

The short motif at 40–51 (PYPSGAGLHVGH) is the 'HIGH' region element. The 'KMSKS' region signature appears at 576–580 (KMSKS). Lys-579 contributes to the ATP binding site.

The protein belongs to the class-I aminoacyl-tRNA synthetase family.

The protein localises to the cytoplasm. The catalysed reaction is tRNA(Leu) + L-leucine + ATP = L-leucyl-tRNA(Leu) + AMP + diphosphate. The protein is Leucine--tRNA ligase of Geobacillus thermodenitrificans (strain NG80-2).